The chain runs to 312 residues: Ribosomal protein L11 methyltransferase (312 aa).

Thr-164, Gly-185, Asp-207, and Asn-249 together coordinate S-adenosyl-L-methionine.

The protein belongs to the methyltransferase superfamily. PrmA family.

The protein localises to the cytoplasm. The enzyme catalyses L-lysyl-[protein] + 3 S-adenosyl-L-methionine = N(6),N(6),N(6)-trimethyl-L-lysyl-[protein] + 3 S-adenosyl-L-homocysteine + 3 H(+). Methylates ribosomal protein L11. The chain is Ribosomal protein L11 methyltransferase from Clostridium novyi (strain NT).